The following is a 321-amino-acid chain: Sideroflexin-3 (321 aa).

Met1 carries the N-acetylmethionine modification. A run of 4 helical transmembrane segments spans residues 146 to 164, 174 to 194, 226 to 246, and 266 to 286; these read LGTA…ALGL, LVGR…NIPL, FQVV…PPLI, and LQVG…CALF.

The protein belongs to the sideroflexin family.

The protein resides in the mitochondrion membrane. It catalyses the reaction L-serine(in) = L-serine(out). Mitochondrial serine transporter that mediates transport of serine into mitochondria, an important step of the one-carbon metabolism pathway. Mitochondrial serine is converted to glycine and formate, which then exits to the cytosol where it is used to generate the charged folates that serve as one-carbon donors. In Homo sapiens (Human), this protein is Sideroflexin-3.